A 155-amino-acid chain; its full sequence is Molybdopterin synthase catalytic subunit (155 aa).

Substrate is bound by residues 39 to 41 (LCR), 103 to 104 (HR), Lys119, and 126 to 128 (KKE).

It belongs to the MoaE family. As to quaternary structure, heterotetramer of 2 MoaD subunits and 2 MoaE subunits. Also stable as homodimer. The enzyme changes between these two forms during catalysis.

The enzyme catalyses 2 [molybdopterin-synthase sulfur-carrier protein]-C-terminal-Gly-aminoethanethioate + cyclic pyranopterin phosphate + H2O = molybdopterin + 2 [molybdopterin-synthase sulfur-carrier protein]-C-terminal Gly-Gly + 2 H(+). It functions in the pathway cofactor biosynthesis; molybdopterin biosynthesis. In terms of biological role, converts molybdopterin precursor Z into molybdopterin. This requires the incorporation of two sulfur atoms into precursor Z to generate a dithiolene group. The sulfur is provided by MoaD. The sequence is that of Molybdopterin synthase catalytic subunit (moaE) from Rhizobium meliloti (strain 1021) (Ensifer meliloti).